Consider the following 31-residue polypeptide: MLTITSFFGFLLAALTITSVLFIGLTKIRLI.

Residues 4 to 24 (ITSFFGFLLAALTITSVLFIG) traverse the membrane as a helical segment.

It belongs to the PetL family. As to quaternary structure, the 4 large subunits of the cytochrome b6-f complex are cytochrome b6, subunit IV (17 kDa polypeptide, PetD), cytochrome f and the Rieske protein, while the 4 small subunits are PetG, PetL, PetM and PetN. The complex functions as a dimer.

The protein localises to the plastid. It is found in the chloroplast thylakoid membrane. Functionally, component of the cytochrome b6-f complex, which mediates electron transfer between photosystem II (PSII) and photosystem I (PSI), cyclic electron flow around PSI, and state transitions. PetL is important for photoautotrophic growth as well as for electron transfer efficiency and stability of the cytochrome b6-f complex. This Oenothera elata subsp. hookeri (Hooker's evening primrose) protein is Cytochrome b6-f complex subunit 6.